A 57-amino-acid chain; its full sequence is Large ribosomal subunit protein bL32 (57 aa).

Positions 1-19 (MAVPKRRMSRANTRSRRAQ) are enriched in basic residues. The interval 1-20 (MAVPKRRMSRANTRSRRAQW) is disordered.

This sequence belongs to the bacterial ribosomal protein bL32 family.

The polypeptide is Large ribosomal subunit protein bL32 (Mycobacterium avium (strain 104)).